The following is a 504-amino-acid chain: DnaJ homolog subfamily C member 3 (504 aa).

The N-terminal stretch at 1 to 31 (MVAPGSVRSRLGAVFPFLLVLVDLQYEGAEC) is a signal peptide. TPR repeat units follow at residues 37–70 (VEKH…DPDN), 72–104 (IAYY…KMDF), 105–138 (TAAR…NPSE), 154–187 (MQRL…CVWD), 188–221 (AELR…KNDN), 222–255 (TEAF…DQDH), 268–301 (LNKL…EPSV), 306–339 (VRSK…EPDN), and 340–373 (VNAL…NEND). Cysteine 248 and cysteine 258 are oxidised to a cystine. Serine 274 is modified (phosphoserine). Cysteine 313 and cysteine 329 form a disulfide bridge. The interval 375–393 (QIREGLEKAQRLLKQSQKR) is flexible linker. Positions 394 to 462 (DYYKILGVKR…EMRRKFDDGE (69 aa)) constitute a J domain. The disordered stretch occupies residues 451–481 (DPEMRRKFDDGEDPLDAETQQGGGSNPFHRS). The residue at position 475 (serine 475) is a Phosphoserine.

Interacts with EIF2AK2 and EIF2AK3. Forms a trimeric complex with DNAJB1 and HSPA8. Interacts with THAP12.

It localises to the endoplasmic reticulum. In terms of biological role, involved in the unfolded protein response (UPR) during ER stress. Co-chaperone of HSPA8/HSC70, it stimulates its ATPase activity. May inhibit both the autophosphorylation of EIF2AK2/PKR and the ability of EIF2AK2 to catalyze phosphorylation of the EIF2A. May inhibit EIF2AK3/PERK activity. This is DnaJ homolog subfamily C member 3 (Dnajc3) from Rattus norvegicus (Rat).